The chain runs to 295 residues: UDP-N-acetylenolpyruvoylglucosamine reductase (295 aa).

The FAD-binding PCMH-type domain occupies 23 to 188 (QVGGPADFLA…ISAKFALKPG (166 aa)). R167 is a catalytic residue. The Proton donor role is filled by S217. Residue E287 is part of the active site.

It belongs to the MurB family. FAD serves as cofactor.

It localises to the cytoplasm. The enzyme catalyses UDP-N-acetyl-alpha-D-muramate + NADP(+) = UDP-N-acetyl-3-O-(1-carboxyvinyl)-alpha-D-glucosamine + NADPH + H(+). It functions in the pathway cell wall biogenesis; peptidoglycan biosynthesis. Cell wall formation. This is UDP-N-acetylenolpyruvoylglucosamine reductase from Streptococcus equi subsp. zooepidemicus (strain H70).